A 154-amino-acid chain; its full sequence is Aspartate carbamoyltransferase regulatory chain (154 aa).

4 residues coordinate Zn(2+): Cys-109, Cys-114, Cys-138, and Cys-141.

Belongs to the PyrI family. As to quaternary structure, contains catalytic and regulatory chains. It depends on Zn(2+) as a cofactor.

Its function is as follows. Involved in allosteric regulation of aspartate carbamoyltransferase. The chain is Aspartate carbamoyltransferase regulatory chain from Photobacterium profundum (strain SS9).